Here is a 521-residue protein sequence, read N- to C-terminus: Methionine--tRNA ligase (521 aa).

Positions 14 to 24 match the 'HIGH' region motif; that stretch reads YYSSGNPHIGH. Zn(2+) is bound by residues Cys129, Cys132, Cys151, and His155. The short motif at 306-310 is the 'KMSKS' region element; that stretch reads KMSKS. Lys309 is an ATP binding site.

The protein belongs to the class-I aminoacyl-tRNA synthetase family. MetG type 2A subfamily. As to quaternary structure, monomer. Requires Zn(2+) as cofactor.

The protein localises to the cytoplasm. The catalysed reaction is tRNA(Met) + L-methionine + ATP = L-methionyl-tRNA(Met) + AMP + diphosphate. In terms of biological role, is required not only for elongation of protein synthesis but also for the initiation of all mRNA translation through initiator tRNA(fMet) aminoacylation. The sequence is that of Methionine--tRNA ligase from Ureaplasma parvum serovar 3 (strain ATCC 700970).